The sequence spans 430 residues: Enolase (430 aa).

Gln167 contributes to the (2R)-2-phosphoglycerate binding site. Residue Glu209 is the Proton donor of the active site. Mg(2+) contacts are provided by Asp246, Glu287, and Asp314. Residues Lys339, Arg368, Ser369, and Lys390 each coordinate (2R)-2-phosphoglycerate. The active-site Proton acceptor is the Lys339.

The protein belongs to the enolase family. Requires Mg(2+) as cofactor.

It localises to the cytoplasm. It is found in the secreted. The protein localises to the cell surface. It carries out the reaction (2R)-2-phosphoglycerate = phosphoenolpyruvate + H2O. It participates in carbohydrate degradation; glycolysis; pyruvate from D-glyceraldehyde 3-phosphate: step 4/5. In terms of biological role, catalyzes the reversible conversion of 2-phosphoglycerate (2-PG) into phosphoenolpyruvate (PEP). It is essential for the degradation of carbohydrates via glycolysis. The protein is Enolase of Prochlorococcus marinus (strain MIT 9215).